The following is a 350-amino-acid chain: Phosphoribosylformylglycinamidine cyclo-ligase (350 aa).

The protein belongs to the AIR synthase family.

Its subcellular location is the cytoplasm. It catalyses the reaction 2-formamido-N(1)-(5-O-phospho-beta-D-ribosyl)acetamidine + ATP = 5-amino-1-(5-phospho-beta-D-ribosyl)imidazole + ADP + phosphate + H(+). It participates in purine metabolism; IMP biosynthesis via de novo pathway; 5-amino-1-(5-phospho-D-ribosyl)imidazole from N(2)-formyl-N(1)-(5-phospho-D-ribosyl)glycinamide: step 2/2. This is Phosphoribosylformylglycinamidine cyclo-ligase from Cupriavidus necator (strain ATCC 17699 / DSM 428 / KCTC 22496 / NCIMB 10442 / H16 / Stanier 337) (Ralstonia eutropha).